The sequence spans 121 residues: Large ribosomal subunit protein bL20c (121 aa).

Belongs to the bacterial ribosomal protein bL20 family.

The protein localises to the plastid. Its subcellular location is the chloroplast. In terms of biological role, binds directly to 23S ribosomal RNA and is necessary for the in vitro assembly process of the 50S ribosomal subunit. It is not involved in the protein synthesizing functions of that subunit. The sequence is that of Large ribosomal subunit protein bL20c from Lotus japonicus (Lotus corniculatus var. japonicus).